Here is a 448-residue protein sequence, read N- to C-terminus: Asparagine--tRNA ligase (448 aa).

Belongs to the class-II aminoacyl-tRNA synthetase family. Homodimer.

Its subcellular location is the cytoplasm. It carries out the reaction tRNA(Asn) + L-asparagine + ATP = L-asparaginyl-tRNA(Asn) + AMP + diphosphate + H(+). In Streptococcus pyogenes serotype M4 (strain MGAS10750), this protein is Asparagine--tRNA ligase.